We begin with the raw amino-acid sequence, 761 residues long: 5-methyltetrahydropteroyltriglutamate--homocysteine methyltransferase (761 aa).

Residues 16 to 19 (RELK) and Lys-116 each bind 5-methyltetrahydropteroyltri-L-glutamate. L-homocysteine contacts are provided by residues 437-439 (IGS) and Glu-490. Residues 437–439 (IGS) and Glu-490 each bind L-methionine. 5-methyltetrahydropteroyltri-L-glutamate contacts are provided by residues 521–522 (RC) and Trp-567. Residue Asp-605 coordinates L-homocysteine. Asp-605 lines the L-methionine pocket. 5-methyltetrahydropteroyltri-L-glutamate is bound at residue Glu-611. Residues His-647, Cys-649, and Glu-671 each coordinate Zn(2+). His-700 functions as the Proton donor in the catalytic mechanism. Cys-732 is a binding site for Zn(2+).

This sequence belongs to the vitamin-B12 independent methionine synthase family. Requires Zn(2+) as cofactor.

It carries out the reaction 5-methyltetrahydropteroyltri-L-glutamate + L-homocysteine = tetrahydropteroyltri-L-glutamate + L-methionine. It functions in the pathway amino-acid biosynthesis; L-methionine biosynthesis via de novo pathway; L-methionine from L-homocysteine (MetE route): step 1/1. Functionally, catalyzes the transfer of a methyl group from 5-methyltetrahydrofolate to homocysteine resulting in methionine formation. This Chromohalobacter salexigens (strain ATCC BAA-138 / DSM 3043 / CIP 106854 / NCIMB 13768 / 1H11) protein is 5-methyltetrahydropteroyltriglutamate--homocysteine methyltransferase.